Reading from the N-terminus, the 330-residue chain is Inactive hydroxysteroid dehydrogenase-like protein 1 (330 aa).

Alanine 2 is subject to N-acetylalanine. Residues alanine 2–alanine 82 form a required for mitochondria translocation region. Residues glycine 74–glycine 80, aspartate 125, and lysine 222 contribute to the NADP(+) site.

It belongs to the short-chain dehydrogenases/reductases (SDR) family. 17-beta-HSD 3 subfamily. In terms of assembly, interacts with STYXL1. As to expression, highly expressed in testis and ovary. Also detected in thyroid, spinal cord, adrenal gland, heart, placenta, skeletal muscle, small intestine, colon, spleen, prostate and pancreas.

Its subcellular location is the mitochondrion. The sequence is that of Inactive hydroxysteroid dehydrogenase-like protein 1 (HSDL1) from Homo sapiens (Human).